Consider the following 102-residue polypeptide: Urease subunit beta (102 aa).

Belongs to the urease beta subunit family. In terms of assembly, heterotrimer of UreA (gamma), UreB (beta) and UreC (alpha) subunits. Three heterotrimers associate to form the active enzyme.

It is found in the cytoplasm. The catalysed reaction is urea + 2 H2O + H(+) = hydrogencarbonate + 2 NH4(+). It participates in nitrogen metabolism; urea degradation; CO(2) and NH(3) from urea (urease route): step 1/1. The polypeptide is Urease subunit beta (Pseudomonas syringae pv. tomato (strain ATCC BAA-871 / DC3000)).